The primary structure comprises 605 residues: DNA primase (605 aa).

Residues 39 to 63 form a CHC2-type zinc finger; the sequence is CPFHHERTPSFHVVPDKKMYYCFGC. The region spanning 257 to 338 is the Toprim domain; it reads RAAIICEGYM…EVRIVELNGG (82 aa). Residues glutamate 263, aspartate 307, and aspartate 309 each coordinate Mg(2+).

This sequence belongs to the DnaG primase family. As to quaternary structure, monomer. Interacts with DnaB. Requires Zn(2+) as cofactor. The cofactor is Mg(2+).

The enzyme catalyses ssDNA + n NTP = ssDNA/pppN(pN)n-1 hybrid + (n-1) diphosphate.. Functionally, RNA polymerase that catalyzes the synthesis of short RNA molecules used as primers for DNA polymerase during DNA replication. The chain is DNA primase from Treponema pallidum (strain Nichols).